The chain runs to 276 residues: Probable endonuclease 4 (276 aa).

His-67, His-107, Glu-142, Asp-176, His-179, His-211, Asp-224, His-226, and Glu-256 together coordinate Zn(2+).

The protein belongs to the AP endonuclease 2 family. It depends on Zn(2+) as a cofactor.

The enzyme catalyses Endonucleolytic cleavage to 5'-phosphooligonucleotide end-products.. Endonuclease IV plays a role in DNA repair. It cleaves phosphodiester bonds at apurinic or apyrimidinic (AP) sites, generating a 3'-hydroxyl group and a 5'-terminal sugar phosphate. This Methanosphaera stadtmanae (strain ATCC 43021 / DSM 3091 / JCM 11832 / MCB-3) protein is Probable endonuclease 4.